Reading from the N-terminus, the 206-residue chain is Probable thymidylate kinase (206 aa).

10–17 (GIDGSGKS) provides a ligand contact to ATP.

This sequence belongs to the thymidylate kinase family.

It carries out the reaction dTMP + ATP = dTDP + ADP. The protein is Probable thymidylate kinase of Methanosarcina mazei (strain ATCC BAA-159 / DSM 3647 / Goe1 / Go1 / JCM 11833 / OCM 88) (Methanosarcina frisia).